Consider the following 400-residue polypeptide: 3-phenylpropionate/cinnamic acid dioxygenase ferredoxin--NAD(+) reductase component (400 aa).

5-36 (TIIIVGGGQAAAMAAASLRQQGFTGELHLFSD) lines the FAD pocket. 146–174 (SVVIVGAGTIGLELAASATQRGCKATVIE) is an NAD(+) binding site.

It belongs to the bacterial ring-hydroxylating dioxygenase ferredoxin reductase family. This dioxygenase system consists of four proteins: the two subunits of the hydroxylase component (HcaE and HcaF), a ferredoxin (HcaC) and a ferredoxin reductase (HcaD). Requires FAD as cofactor.

The catalysed reaction is 2 reduced [2Fe-2S]-[ferredoxin] + NAD(+) + H(+) = 2 oxidized [2Fe-2S]-[ferredoxin] + NADH. The protein operates within aromatic compound metabolism; 3-phenylpropanoate degradation. In terms of biological role, part of the multicomponent 3-phenylpropionate dioxygenase, that converts 3-phenylpropionic acid (PP) and cinnamic acid (CI) into 3-phenylpropionate-dihydrodiol (PP-dihydrodiol) and cinnamic acid-dihydrodiol (CI-dihydrodiol), respectively. The protein is 3-phenylpropionate/cinnamic acid dioxygenase ferredoxin--NAD(+) reductase component of Escherichia coli O7:K1 (strain IAI39 / ExPEC).